We begin with the raw amino-acid sequence, 553 residues long: Arginine--tRNA ligase (553 aa).

Residues 130–140 (ANPTGDLHIGH) carry the 'HIGH' region motif.

The protein belongs to the class-I aminoacyl-tRNA synthetase family. As to quaternary structure, monomer.

It is found in the cytoplasm. The enzyme catalyses tRNA(Arg) + L-arginine + ATP = L-arginyl-tRNA(Arg) + AMP + diphosphate. In Staphylococcus epidermidis (strain ATCC 12228 / FDA PCI 1200), this protein is Arginine--tRNA ligase.